Reading from the N-terminus, the 435-residue chain is Enolase (435 aa).

Gln-163 is a (2R)-2-phosphoglycerate binding site. Glu-205 functions as the Proton donor in the catalytic mechanism. 3 residues coordinate Mg(2+): Asp-243, Glu-292, and Asp-319. Positions 344, 373, 374, and 395 each coordinate (2R)-2-phosphoglycerate. Lys-344 functions as the Proton acceptor in the catalytic mechanism.

Belongs to the enolase family. Requires Mg(2+) as cofactor.

The protein localises to the cytoplasm. It is found in the secreted. It localises to the cell surface. It carries out the reaction (2R)-2-phosphoglycerate = phosphoenolpyruvate + H2O. Its pathway is carbohydrate degradation; glycolysis; pyruvate from D-glyceraldehyde 3-phosphate: step 4/5. Its function is as follows. Catalyzes the reversible conversion of 2-phosphoglycerate (2-PG) into phosphoenolpyruvate (PEP). It is essential for the degradation of carbohydrates via glycolysis. This chain is Enolase, found in Streptococcus uberis (strain ATCC BAA-854 / 0140J).